The primary structure comprises 334 residues: Protein-methionine-sulfoxide reductase catalytic subunit MsrP (334 aa).

Residues 1 to 44 (MKAVNPLTENDVTPESLFNARRRTVLKMLGMSAAALSLPGAARA) constitute a signal peptide (tat-type signal). Mo-molybdopterin-binding positions include N88, 91-92 (YE), C146, T181, N233, R238, and 249-251 (GIK).

The protein belongs to the MsrP family. In terms of assembly, heterodimer of a catalytic subunit (MsrP) and a heme-binding subunit (MsrQ). The cofactor is Mo-molybdopterin. Post-translationally, predicted to be exported by the Tat system. The position of the signal peptide cleavage has not been experimentally proven.

The protein localises to the periplasm. The catalysed reaction is L-methionyl-[protein] + a quinone + H2O = L-methionyl-(S)-S-oxide-[protein] + a quinol. The enzyme catalyses L-methionyl-[protein] + a quinone + H2O = L-methionyl-(R)-S-oxide-[protein] + a quinol. Part of the MsrPQ system that repairs oxidized periplasmic proteins containing methionine sulfoxide residues (Met-O), using respiratory chain electrons. Thus protects these proteins from oxidative-stress damage caused by reactive species of oxygen and chlorine generated by the host defense mechanisms. MsrPQ is essential for the maintenance of envelope integrity under bleach stress, rescuing a wide series of structurally unrelated periplasmic proteins from methionine oxidation. The catalytic subunit MsrP is non-stereospecific, being able to reduce both (R-) and (S-) diastereoisomers of methionine sulfoxide. This chain is Protein-methionine-sulfoxide reductase catalytic subunit MsrP, found in Erwinia tasmaniensis (strain DSM 17950 / CFBP 7177 / CIP 109463 / NCPPB 4357 / Et1/99).